The sequence spans 199 residues: Pyridoxine/pyridoxamine 5'-phosphate oxidase (199 aa).

FMN is bound by residues 44–49 (RTVLLK), 59–60 (YT), Lys-66, and Gln-91. Lys-49 serves as a coordination point for substrate. 3 residues coordinate substrate: Tyr-109, Arg-113, and Ser-117. Residues 126-127 (QS) and Trp-171 contribute to the FMN site. 177–179 (RLH) is a binding site for substrate. Arg-181 serves as a coordination point for FMN.

This sequence belongs to the pyridoxamine 5'-phosphate oxidase family. As to quaternary structure, homodimer. FMN is required as a cofactor.

The enzyme catalyses pyridoxamine 5'-phosphate + O2 + H2O = pyridoxal 5'-phosphate + H2O2 + NH4(+). The catalysed reaction is pyridoxine 5'-phosphate + O2 = pyridoxal 5'-phosphate + H2O2. It participates in cofactor metabolism; pyridoxal 5'-phosphate salvage; pyridoxal 5'-phosphate from pyridoxamine 5'-phosphate: step 1/1. Its pathway is cofactor metabolism; pyridoxal 5'-phosphate salvage; pyridoxal 5'-phosphate from pyridoxine 5'-phosphate: step 1/1. Its function is as follows. Catalyzes the oxidation of either pyridoxine 5'-phosphate (PNP) or pyridoxamine 5'-phosphate (PMP) into pyridoxal 5'-phosphate (PLP). The chain is Pyridoxine/pyridoxamine 5'-phosphate oxidase from Xanthomonas euvesicatoria pv. vesicatoria (strain 85-10) (Xanthomonas campestris pv. vesicatoria).